The chain runs to 300 residues: MNTTSEVIVGTGFQAIRQQLAQMHPELNFVEQLWLAYYKWFDNDVVATGLMSFLLHELIYFGRCIPWMIIDAMPYFRRWKIQPKKVPTLAEQWECTRLVLLSHFTVELPQIWLFDPMCATFGLSTSVPFPPVTKMIWQITLFFFLEDTWHYWAHRLFHYGIFYRFIHKVHHRYSAPFGLSAEYAHPLEIILLGAGTVFVPLMWCYFTHDLHLVTMYIWITLRLFQAVDSHAGYDFPWSLNKFLPIWAGADHHDYHHMAFKDNFSSSFRWWDAVLKTDQNYHQFKARRLAAKYEAESKKAK.

The region spanning 140–276 (TLFFFLEDTW…FRWWDAVLKT (137 aa)) is the Fatty acid hydroxylase domain. Positions 154–158 (HRLFH) match the Histidine box-1 motif. The Histidine box-2 signature appears at 167–171 (HKVHH). The helical transmembrane segment at 186–206 (PLEIILLGAGTVFVPLMWCYF) threads the bilayer. Positions 251–257 (HHDYHHM) match the Histidine box-3 motif.

Belongs to the sterol desaturase family. As to quaternary structure, heterotetramer of erg25, erg26, erg27 and erg28. Erg28 acts as a scaffold to tether erg27 and other 4,4-demethylation-related enzymes, forming a demethylation enzyme complex, in the endoplasmic reticulum. Fe cation is required as a cofactor.

It is found in the endoplasmic reticulum membrane. It catalyses the reaction 4,4-dimethyl-5alpha-cholesta-8,24-dien-3beta-ol + 6 Fe(II)-[cytochrome b5] + 3 O2 + 5 H(+) = 4beta-methylzymosterol-4alpha-carboxylate + 6 Fe(III)-[cytochrome b5] + 4 H2O. The catalysed reaction is 4alpha-methylzymosterol + 6 Fe(II)-[cytochrome b5] + 3 O2 + 5 H(+) = 4alpha-carboxyzymosterol + 6 Fe(III)-[cytochrome b5] + 4 H2O. It participates in steroid biosynthesis; zymosterol biosynthesis; zymosterol from lanosterol: step 3/6. It functions in the pathway steroid metabolism; ergosterol biosynthesis. In terms of biological role, C-4 methylsterol oxidase; part of the third module of ergosterol biosynthesis pathway that includes by the late steps of the pathway. Erg25 is a catalytic component of the C-4 demethylation complex that catalyzes the three-step monooxygenation required for the demethylation of 4,4-dimethyl and 4alpha-methylsterols. The third module or late pathway involves the ergosterol synthesis itself through consecutive reactions that mainly occur in the endoplasmic reticulum (ER) membrane. Firstly, the squalene synthase erg9 catalyzes the condensation of 2 farnesyl pyrophosphate moieties to form squalene, which is the precursor of all steroids. Secondly, squalene is converted into lanosterol by the consecutive action of the squalene epoxidase erg1 and the lanosterol synthase erg7. The lanosterol 14-alpha-demethylase erg11/cyp1 catalyzes C14-demethylation of lanosterol to produce 4,4'-dimethyl cholesta-8,14,24-triene-3-beta-ol. In the next steps, a complex process involving various demethylation, reduction and desaturation reactions catalyzed by the C-14 reductase erg24 and the C-4 demethylation complex erg25-erg26-erg27 leads to the production of zymosterol. Erg28 likely functions in the C-4 demethylation complex reaction by tethering erg26 and Erg27 to the endoplasmic reticulum or to facilitate interaction between these proteins. Then, the sterol 24-C-methyltransferase erg6 catalyzes the methyl transfer from S-adenosyl-methionine to the C-24 of zymosterol to form fecosterol. The C-8 sterol isomerase erg2 catalyzes the reaction which results in unsaturation at C-7 in the B ring of sterols and thus converts fecosterol to episterol. The sterol-C5-desaturases erg31 and erg32 then catalyze the introduction of a C-5 double bond in the B ring to produce 5-dehydroepisterol. The C-22 sterol desaturase erg5 further converts 5-dehydroepisterol into ergosta-5,7,22,24(28)-tetraen-3beta-ol by forming the C-22(23) double bond in the sterol side chain. Finally, ergosta-5,7,22,24(28)-tetraen-3beta-ol is substrate of the C-24(28) sterol reductase erg4 to produce ergosterol. In the genus Schizosaccharomyces, a second route exists between lanosterol and fecosterol, via the methylation of lanosterol to eburicol by erg6, followed by C14-demethylation by erg11/cyp1 and C4-demethylation by the demethylation complex erg25-erg26-erg27. The polypeptide is C-4 methylsterol oxidase erg25 (Schizosaccharomyces pombe (strain 972 / ATCC 24843) (Fission yeast)).